The following is a 174-amino-acid chain: NADPH-dependent 7-cyano-7-deazaguanine reductase (174 aa).

Cysteine 72 (thioimide intermediate) is an active-site residue. The active-site Proton donor is aspartate 79. Residues 94–96 (VES) and 113–114 (HE) each bind substrate.

Belongs to the GTP cyclohydrolase I family. QueF type 1 subfamily.

It localises to the cytoplasm. It carries out the reaction 7-aminomethyl-7-carbaguanine + 2 NADP(+) = 7-cyano-7-deazaguanine + 2 NADPH + 3 H(+). The protein operates within tRNA modification; tRNA-queuosine biosynthesis. In terms of biological role, catalyzes the NADPH-dependent reduction of 7-cyano-7-deazaguanine (preQ0) to 7-aminomethyl-7-deazaguanine (preQ1). The polypeptide is NADPH-dependent 7-cyano-7-deazaguanine reductase (Synechococcus elongatus (strain ATCC 33912 / PCC 7942 / FACHB-805) (Anacystis nidulans R2)).